The primary structure comprises 547 residues: Mitogen-activated protein kinase 15 (547 aa).

Residues 1 to 20 (MCAAEVDRHVSQRYLIKRRL) form a ubiquitin-conjugating region. The 292-residue stretch at 14–305 (YLIKRRLGKG…AEQALQHPYV (292 aa)) folds into the Protein kinase domain. Residues 20–28 (LGKGAYGIV) and lysine 43 contribute to the ATP site. Aspartate 138 acts as the Proton acceptor in catalysis. Threonine 176 carries the phosphothreonine modification. Positions 176-178 (TEY) match the TXY motif. A Phosphotyrosine modification is found at tyrosine 178. The segment at 266 to 286 (LDALLPPDTPPEALDLLKRLL) is necessary to interact with ESRRA, to regulate its subcellular localization and to inhibit its transcriptional activity. The requires for interaction with GABARAP, MAP1LC3B AND GABARAPL1 stretch occupies residues 301 to 380 (QHPYVQRFHC…SQRQSLKPGV (80 aa)). The interval 370 to 503 (ASQRQSLKPG…EAPEPRPGRR (134 aa)) is disordered. PXXXP motif repeat units follow at residues 378–382 (PGVLP) and 385–389 (LAETP). 2 PXXXP motif; regulates binding with chromatin and interaction with PCNA repeats span residues 393-397 (RGPKP) and 401-405 (HGHDP). The span at 401–414 (HGHDPEHVEVRRQS) shows a compositional bias: basic and acidic residues. Position 449 is an omega-N-methylarginine (arginine 449). A compositionally biased stretch (polar residues) spans 454-465 (SLTSQAAAQAAN). Residues 481–490 (AVGARRVPSR) are compositionally biased toward low complexity. Basic and acidic residues predominate over residues 491-500 (LPREAPEPRP).

It belongs to the protein kinase superfamily. CMGC Ser/Thr protein kinase family. MAP kinase subfamily. In terms of assembly, interacts with CSK/c-Src, ABL1, RET and TGFB1I1. Interacts with GABARAP, MAP1LC3B and GABARAPL1; controls, in a kinase-dependent fashion, both basal and starvation-induced autophagy. Interacts with ESRRA; promotes re-localization of ESRRA to the cytoplasm through a XPO1-dependent mechanism then inhibits ESRRA transcriptional activity. Interacts with PCNA; the interaction is chromatin binding- and kinase activity-dependent and prevents MDM2-mediated PCNA destruction by inhibiting the association of PCNA with MDM2. Interacts with DVL2. Interacts with CLIC3; MAPK15 does not phosphorylates CLIC3. In terms of processing, autophosphorylated on Thr-176 and Tyr-178; activates the enzyme. Dephosphorylated by PTPN1. Post-translationally, ubiquitinated. Ubiquitination may allow its tight kinase activity regulation and rapid turnover. May be ubiquitinated by a SCF E3 ligase. As to expression, ubiquitously expressed at a weak level. Highest expression is found in testis and to a lower extent in lung.

The protein localises to the cytoplasm. Its subcellular location is the cytoskeleton. It localises to the cilium basal body. The protein resides in the cell junction. It is found in the tight junction. The protein localises to the microtubule organizing center. Its subcellular location is the centrosome. It localises to the centriole. The protein resides in the cytoplasmic vesicle. It is found in the autophagosome. The protein localises to the golgi apparatus. Its subcellular location is the nucleus. It localises to the spindle. It carries out the reaction L-seryl-[protein] + ATP = O-phospho-L-seryl-[protein] + ADP + H(+). The catalysed reaction is L-threonyl-[protein] + ATP = O-phospho-L-threonyl-[protein] + ADP + H(+). Activated by threonine and tyrosine phosphorylation. Inhibited by dual specificity phosphatases, such as DUSP1. Phosphorylation and activation in response to DNA damaging agents, serum stimulation. Constitutively activated when phosphorylated on Tyr-178. Activity depends on the relative rates of MAPK15 autophosphorylation and dephosphorylation by PTPN1. Functionally, atypical MAPK protein that regulates several process such as autophagy, ciliogenesis, protein trafficking/secretion and genome integrity, in a kinase activity-dependent manner. Controls both, basal and starvation-induced autophagy throught its interaction with GABARAP, MAP1LC3B and GABARAPL1 leading to autophagosome formation, SQSTM1 degradation and reduced MAP1LC3B inhibitory phosphorylation. Regulates primary cilium formation and the localization of ciliary proteins involved in cilium structure, transport, and signaling. Prevents the relocation of the sugar-adding enzymes from the Golgi to the endoplasmic reticulum, thereby restricting the production of sugar-coated proteins. Upon amino-acid starvation, mediates transitional endoplasmic reticulum site disassembly and inhibition of secretion. Binds to chromatin leading to MAPK15 activation and interaction with PCNA, that which protects genomic integrity by inhibiting MDM2-mediated degradation of PCNA. Regulates DA transporter (DAT) activity and protein expression via activation of RhoA. In response to H(2)O(2) treatment phosphorylates ELAVL1, thus preventing it from binding to the PDCD4 3'UTR and rendering the PDCD4 mRNA accessible to miR-21 and leading to its degradation and loss of protein expression. Also functions in a kinase activity-independent manner as a negative regulator of growth. Phosphorylates in vitro FOS and MBP. During oocyte maturation, plays a key role in the microtubule organization and mei- otic cell cycle progression in oocytes, fertilized eggs, and early embryos. Interacts with ESRRA promoting its re-localization from the nucleus to the cytoplasm and then prevents its transcriptional activity. The protein is Mitogen-activated protein kinase 15 (Mapk15) of Rattus norvegicus (Rat).